Consider the following 245-residue polypeptide: tRNA1(Val) (adenine(37)-N6)-methyltransferase (245 aa).

Belongs to the methyltransferase superfamily. tRNA (adenine-N(6)-)-methyltransferase family.

Its subcellular location is the cytoplasm. The catalysed reaction is adenosine(37) in tRNA1(Val) + S-adenosyl-L-methionine = N(6)-methyladenosine(37) in tRNA1(Val) + S-adenosyl-L-homocysteine + H(+). Specifically methylates the adenine in position 37 of tRNA(1)(Val) (anticodon cmo5UAC). This chain is tRNA1(Val) (adenine(37)-N6)-methyltransferase, found in Klebsiella pneumoniae subsp. pneumoniae (strain ATCC 700721 / MGH 78578).